Consider the following 282-residue polypeptide: NADPH-dependent 7-cyano-7-deazaguanine reductase (282 aa).

Substrate is bound at residue 88–90; it reads IES. 90–91 provides a ligand contact to NADPH; the sequence is SK. Catalysis depends on cysteine 190, which acts as the Thioimide intermediate. The active-site Proton donor is aspartate 197. 229-230 provides a ligand contact to substrate; that stretch reads HE. 258–259 contacts NADPH; that stretch reads RG.

This sequence belongs to the GTP cyclohydrolase I family. QueF type 2 subfamily. Homodimer.

Its subcellular location is the cytoplasm. It carries out the reaction 7-aminomethyl-7-carbaguanine + 2 NADP(+) = 7-cyano-7-deazaguanine + 2 NADPH + 3 H(+). It functions in the pathway tRNA modification; tRNA-queuosine biosynthesis. Catalyzes the NADPH-dependent reduction of 7-cyano-7-deazaguanine (preQ0) to 7-aminomethyl-7-deazaguanine (preQ1). The sequence is that of NADPH-dependent 7-cyano-7-deazaguanine reductase from Shigella flexneri serotype 5b (strain 8401).